The chain runs to 434 residues: UDP-N-acetylenolpyruvoylglucosamine reductase (434 aa).

The FAD-binding PCMH-type domain occupies 51-238; the sequence is IGAAPAGVVE…TAVEFQLTTD (188 aa). R216 is a catalytic residue. The active-site Proton donor is the S299. Residue E425 is part of the active site.

Belongs to the MurB family. It depends on FAD as a cofactor.

The protein resides in the cytoplasm. It catalyses the reaction UDP-N-acetyl-alpha-D-muramate + NADP(+) = UDP-N-acetyl-3-O-(1-carboxyvinyl)-alpha-D-glucosamine + NADPH + H(+). It participates in cell wall biogenesis; peptidoglycan biosynthesis. Its function is as follows. Cell wall formation. This is UDP-N-acetylenolpyruvoylglucosamine reductase from Corynebacterium jeikeium (strain K411).